The sequence spans 342 residues: Ribosomal RNA small subunit methyltransferase H (342 aa).

Residues 36 to 38 (GGH), Asp56, Phe82, Asp100, and Gln107 each bind S-adenosyl-L-methionine. Positions 311–342 (GESGMGKGNSAAASRFPTADSPFPASANGDAA) are disordered.

It belongs to the methyltransferase superfamily. RsmH family.

It localises to the cytoplasm. The catalysed reaction is cytidine(1402) in 16S rRNA + S-adenosyl-L-methionine = N(4)-methylcytidine(1402) in 16S rRNA + S-adenosyl-L-homocysteine + H(+). Functionally, specifically methylates the N4 position of cytidine in position 1402 (C1402) of 16S rRNA. The polypeptide is Ribosomal RNA small subunit methyltransferase H (Xanthomonas axonopodis pv. citri (strain 306)).